Consider the following 121-residue polypeptide: Small ribosomal subunit protein uS13 (121 aa).

A disordered region spans residues 99–121 (RGQRTRTNSRTRKGPRRKIMKKK). Residues 101–121 (QRTRTNSRTRKGPRRKIMKKK) show a composition bias toward basic residues.

The protein belongs to the universal ribosomal protein uS13 family. In terms of assembly, part of the 30S ribosomal subunit. Forms a loose heterodimer with protein S19. Forms two bridges to the 50S subunit in the 70S ribosome.

Located at the top of the head of the 30S subunit, it contacts several helices of the 16S rRNA. In the 70S ribosome it contacts the 23S rRNA (bridge B1a) and protein L5 of the 50S subunit (bridge B1b), connecting the 2 subunits; these bridges are implicated in subunit movement. Contacts the tRNAs in the A and P-sites. The sequence is that of Small ribosomal subunit protein uS13 from Thermodesulfovibrio yellowstonii (strain ATCC 51303 / DSM 11347 / YP87).